The sequence spans 297 residues: tRNA dimethylallyltransferase (297 aa).

8 to 15 contributes to the ATP binding site; sequence GATASGKS. 10-15 is a substrate binding site; the sequence is TASGKS. Residues 33-36 are interaction with substrate tRNA; it reads DSLS.

It belongs to the IPP transferase family. In terms of assembly, monomer. Mg(2+) is required as a cofactor.

It carries out the reaction adenosine(37) in tRNA + dimethylallyl diphosphate = N(6)-dimethylallyladenosine(37) in tRNA + diphosphate. In terms of biological role, catalyzes the transfer of a dimethylallyl group onto the adenine at position 37 in tRNAs that read codons beginning with uridine, leading to the formation of N6-(dimethylallyl)adenosine (i(6)A). The chain is tRNA dimethylallyltransferase from Sulfurimonas denitrificans (strain ATCC 33889 / DSM 1251) (Thiomicrospira denitrificans (strain ATCC 33889 / DSM 1251)).